We begin with the raw amino-acid sequence, 447 residues long: uncharacterized protein (447 aa).

Transmembrane regions (helical) follow at residues 17 to 37 (IMMMALGGAIGAGLFKGSSSA), 40 to 60 (VAGPSVIIAYLLGGIILLFIM), 95 to 115 (IYWKMWVLNIAAEAVVAAIFI), 118 to 138 (WLPGCPIWVLALGISLIVTIV), 154 to 174 (AMIKITVIIIFIILGLLLLFV), 200 to 220 (GLITAMLVVIYSYGGTEIIGV), 243 to 263 (IVAFYLLPFFIIVSLIPWNQV), 289 to 311 (AVILLAIISSMNSGLYGSSRILY), 333 to 353 (MFAILMCTSSLYIGVLISLFA), 361 to 381 (LMGSLGYTVLFIWLIIGFAHL), 393 to 415 (YYVKWFPYTTWFAIVALLAILIG), and 419 to 441 (TTSIVITGITAAIYLLITVAYLV).

The protein belongs to the amino acid-polyamine-organocation (APC) superfamily.

The protein localises to the cell membrane. Functionally, may participate in leucine metabolism. May transport leucine or a compound related to leucine metabolism. This is an uncharacterized protein from Bacillus subtilis (strain 168).